Here is a 153-residue protein sequence, read N- to C-terminus: 6,7-dimethyl-8-ribityllumazine synthase (153 aa).

5-amino-6-(D-ribitylamino)uracil contacts are provided by residues phenylalanine 21, 55 to 57 (AFE), and 79 to 81 (CVI). 84-85 (AT) provides a ligand contact to (2S)-2-hydroxy-3-oxobutyl phosphate. The active-site Proton donor is histidine 87. 5-amino-6-(D-ribitylamino)uracil is bound at residue phenylalanine 112. Arginine 126 is a binding site for (2S)-2-hydroxy-3-oxobutyl phosphate.

The protein belongs to the DMRL synthase family. Forms an icosahedral capsid composed of 60 subunits, arranged as a dodecamer of pentamers.

The enzyme catalyses (2S)-2-hydroxy-3-oxobutyl phosphate + 5-amino-6-(D-ribitylamino)uracil = 6,7-dimethyl-8-(1-D-ribityl)lumazine + phosphate + 2 H2O + H(+). Its pathway is cofactor biosynthesis; riboflavin biosynthesis; riboflavin from 2-hydroxy-3-oxobutyl phosphate and 5-amino-6-(D-ribitylamino)uracil: step 1/2. Its function is as follows. Catalyzes the formation of 6,7-dimethyl-8-ribityllumazine by condensation of 5-amino-6-(D-ribitylamino)uracil with 3,4-dihydroxy-2-butanone 4-phosphate. This is the penultimate step in the biosynthesis of riboflavin. The sequence is that of 6,7-dimethyl-8-ribityllumazine synthase from Staphylococcus epidermidis (strain ATCC 35984 / DSM 28319 / BCRC 17069 / CCUG 31568 / BM 3577 / RP62A).